Here is a 522-residue protein sequence, read N- to C-terminus: Tubulin-specific chaperone E (522 aa).

One can recognise a CAP-Gly domain in the interval 27-71 (GNVPPTPGLWLGVEWDNHLRGKHNGTHEGTKYFTCSHPTGGSFIR). LRR repeat units lie at residues 149–170 (NIMTADLSKNLFSSWESLAHIS), 175–196 (NLTSLDLSENKLNPSSNPSSLA), 201–222 (NLKVLSLNRTGMKWNEILQCAS), 226–248 (ALEELHLVSNDISLLEQPVNNLQ), 249–270 (NLTILDISNNKIVDGNQLHTIA), 274–295 (RLKQVIVSNNIISSISFPDVDF), and 303–324 (SLTSLAVNGNNISEWCVINELH). Positions 337–379 (NPLMDLDKNPETVRQLIIAKIENLKFLNKTEIFPTERRGAELD) constitute an LRRCT domain.

The protein belongs to the TBCE family. Supercomplex made of cofactors A to E. Cofactors A and D function by capturing and stabilizing tubulin in a quasi-native conformation. Cofactor E binds to the cofactor D-tubulin complex; interaction with cofactor C then causes the release of tubulin polypeptides that are committed to the native state.

It is found in the cytoplasm. It localises to the cytoskeleton. In terms of biological role, tubulin-folding protein; involved in the second step of the tubulin folding pathway. In Xenopus laevis (African clawed frog), this protein is Tubulin-specific chaperone E (tbce).